A 462-amino-acid chain; its full sequence is RuvB-like 2 (462 aa).

76–83 (GQPGTGKT) serves as a coordination point for ATP.

The protein belongs to the RuvB family. Forms homohexameric rings. Can form a dodecamer with ruvbl2 made of two stacked hexameric rings. Is a component of the RNA polymerase II holoenzyme complex. Component of the chromatin-remodeling Ino80 complex. Component of some MLL1/MLL complex.

The protein localises to the nucleus. The protein resides in the dynein axonemal particle. The enzyme catalyses ATP + H2O = ADP + phosphate + H(+). In terms of biological role, has single-stranded DNA-stimulated ATPase and ATP-dependent DNA helicase (5' to 3') activity suggesting a role in nuclear processes such as recombination and transcription. Proposed core component of the chromatin remodeling INO80 complex which exhibits DNA- and nucleosome-activated ATPase activity and catalyzes ATP-dependent nucleosome sliding. Involved in the endoplasmic reticulum (ER)-associated degradation (ERAD) pathway where it negatively regulates expression of ER stress response genes. The protein is RuvB-like 2 (ruvbl2) of Xenopus laevis (African clawed frog).